The following is a 121-amino-acid chain: Chromosome transmission fidelity protein 8 homolog (121 aa).

The protein belongs to the CTF8 family. As to quaternary structure, component of the CTF18-RFC complex, which consists of CTF18, CTF8, DSCC1, RFC2, RFC3, RFC4 and RFC5. The CTF18-RFC complex does not interact with the Rad9/Rad1/Hus1 complex. The CTF18-RFC complex interacts with POLH. CTF18/CTF8/DSCC1 associate with PCNA. CTF8 exists as a dimer with DSCC1.

The protein resides in the nucleus. Functionally, chromosome cohesion factor involved in sister chromatid cohesion and fidelity of chromosome transmission. Component of one of the cell nuclear antigen loader complexes, CTF18-replication factor C (CTF18-RFC), which consists of CTF18, CTF8, DSCC1, RFC2, RFC3, RFC4 and RFC5. The CTF18-RFC complex binds to single-stranded and primed DNAs and has weak ATPase activity that is stimulated the presence of primed DNA, replication protein A (RPA) and proliferating cell nuclear antigen (PCNA). The CTF18-RFC complex catalyzes the ATP-dependent loading of PCNA onto primed and gapped DNA. It also interacts with and stimulates POLH, which is suggestive of a protein network that coordinates DNA repair, recombination and chromosome cohesion reactions with replication fork progression. This Homo sapiens (Human) protein is Chromosome transmission fidelity protein 8 homolog.